We begin with the raw amino-acid sequence, 405 residues long: uncharacterized protein (405 aa).

13 helical membrane-spanning segments follow: residues 19–39 (IVSIVMFNFASYLTIGLPLAV), 48–68 (MGFSAFWAGLIISLQYFATLL), 85–105 (IVVFGLCGCFLSGFGYLLADI), 106–126 (ASAWPMISLLLLGLGRVILGI), 129–149 (SFAGTGSTLWGVGVVGSLHIG), 156–176 (GIVTYGAMAMGAPLGVLCYAW), 178–198 (GLQGLALTVMGVALLAILLAL), 224–244 (GMALALASAGFGVIATFITLF), 252–272 (GAAFALTLFSVAFVGTRLLFP), 283–303 (VAMICFGVEIIGLLLVGTAAM), 309–329 (IGVLLTGMGFSLVFPALGVVA), 344–364 (TYTVFMDMSLGVTGPLAGLVM), and 366–386 (WAGVPVIYLAAAGLVAMALLL).

It belongs to the major facilitator superfamily. YhhS family.

The protein resides in the cell inner membrane. This is an uncharacterized protein from Salmonella paratyphi C (strain RKS4594).